Reading from the N-terminus, the 60-residue chain is Metallothionein A (60 aa).

The beta stretch occupies residues 1–28 (MDPCECSKTGKCNCGTSCTCTNCSCKCC). Cys-4, Cys-6, Cys-12, Cys-14, Cys-18, Cys-20, Cys-23, Cys-25, Cys-28, Cys-32, Cys-33, Cys-35, Cys-36, Cys-40, Cys-43, Cys-47, Cys-49, Cys-54, Cys-58, and Cys-59 together coordinate a divalent metal cation. The alpha stretch occupies residues 29-60 (KKSCCSCCPSGCSKCASGCVCKGNSCDKSCCQ).

Belongs to the metallothionein superfamily. Type 1 family.

Functionally, metallothioneins have a high content of cysteine residues that bind various heavy metals. This chain is Metallothionein A (mta), found in Cyprinodon sp. (Pupfish).